Here is a 554-residue protein sequence, read N- to C-terminus: (+)-delta-cadinene synthase isozyme XC1 (554 aa).

Positions 1–16 (MASQVSQMPSSSPLSS) are enriched in low complexity. The segment at 1–23 (MASQVSQMPSSSPLSSNKDEMRP) is disordered. The Mg(2+) site is built by aspartate 307, aspartate 311, aspartate 451, and glutamate 455. Residues 307 to 311 (DDTYD) carry the DDXXD motif motif.

This sequence belongs to the terpene synthase family. It depends on Mg(2+) as a cofactor.

It catalyses the reaction (2E,6E)-farnesyl diphosphate = (1S,8aR)-delta-cadinene + diphosphate. The protein operates within secondary metabolite biosynthesis; terpenoid biosynthesis. Its function is as follows. Responsible for the cyclization of trans,trans-farnesyl diphosphate (FPP) to (+)-delta cadinene. The chain is (+)-delta-cadinene synthase isozyme XC1 from Gossypium arboreum (Tree cotton).